The following is a 188-amino-acid chain: HGPRTase-like protein 1 (188 aa).

The protein belongs to the purine/pyrimidine phosphoribosyltransferase family. Archaeal HPRT subfamily.

In terms of biological role, may catalyze a purine salvage reaction, the substrate is unknown. This Haloferax volcanii (strain ATCC 29605 / DSM 3757 / JCM 8879 / NBRC 14742 / NCIMB 2012 / VKM B-1768 / DS2) (Halobacterium volcanii) protein is HGPRTase-like protein 1.